We begin with the raw amino-acid sequence, 379 residues long: Cobalt-precorrin-5B C(1)-methyltransferase (379 aa).

It belongs to the CbiD family.

The enzyme catalyses Co-precorrin-5B + S-adenosyl-L-methionine = Co-precorrin-6A + S-adenosyl-L-homocysteine. Its pathway is cofactor biosynthesis; adenosylcobalamin biosynthesis; cob(II)yrinate a,c-diamide from sirohydrochlorin (anaerobic route): step 6/10. In terms of biological role, catalyzes the methylation of C-1 in cobalt-precorrin-5B to form cobalt-precorrin-6A. In Salmonella schwarzengrund (strain CVM19633), this protein is Cobalt-precorrin-5B C(1)-methyltransferase.